Reading from the N-terminus, the 386-residue chain is uncharacterized protein (386 aa).

Residue Lys185 is modified to N6-(pyridoxal phosphate)lysine.

This sequence belongs to the DegT/DnrJ/EryC1 family. Pyridoxal 5'-phosphate is required as a cofactor.

This is an uncharacterized protein from Methanocaldococcus jannaschii (strain ATCC 43067 / DSM 2661 / JAL-1 / JCM 10045 / NBRC 100440) (Methanococcus jannaschii).